Here is a 370-residue protein sequence, read N- to C-terminus: GTPase Obg (370 aa).

In terms of domain architecture, Obg spans 1–159 (MKFIDEARIE…RMLRLELKVL (159 aa)). Residues 127-146 (NLHFKSSTNRAPRQKTDGKP) form a disordered region. The OBG-type G domain occupies 160-334 (ADVGLLGMPN…LCYAIYDYLA (175 aa)). Residues 166–173 (GMPNAGKS), 191–195 (FTTLA), 213–216 (DIPG), 284–287 (NKLD), and 315–317 (SAL) contribute to the GTP site. Mg(2+)-binding residues include S173 and T193.

It belongs to the TRAFAC class OBG-HflX-like GTPase superfamily. OBG GTPase family. Monomer. The cofactor is Mg(2+).

It is found in the cytoplasm. In terms of biological role, an essential GTPase which binds GTP, GDP and possibly (p)ppGpp with moderate affinity, with high nucleotide exchange rates and a fairly low GTP hydrolysis rate. Plays a role in control of the cell cycle, stress response, ribosome biogenesis and in those bacteria that undergo differentiation, in morphogenesis control. The chain is GTPase Obg from Burkholderia lata (strain ATCC 17760 / DSM 23089 / LMG 22485 / NCIMB 9086 / R18194 / 383).